The primary structure comprises 468 residues: Ubiquitin carboxyl-terminal hydrolase MINDY-1 (468 aa).

Over residues 1–19 (MEQPQTENPAPSKATSAET) the composition is skewed to polar residues. A disordered region spans residues 1-105 (MEQPQTENPA…RPQELPQSPR (105 aa)). The span at 22-41 (SENHEALSGPEKHPQDKDGA) shows a compositional bias: basic and acidic residues. Low complexity predominate over residues 43–54 (ADGAAGEQEPGD). A compositionally biased stretch (pro residues) spans 68–80 (CPPPEASSSPPGP). At S103 the chain carries Phosphoserine. Catalysis depends on C137, which acts as the Nucleophile. The Proton acceptor role is filled by H319. Residues 388–427 (QVDQDYLIALSLQQQQQPQGTLGLSDLELAQQLQQEEYQQ) form a ubiquitin-binding domain (UBD) region. The span at 423 to 432 (EEYQQQQAVQ) shows a compositional bias: low complexity. The interval 423-468 (EEYQQQQAVQPVRTRAPSPQGRGATSGRPAGERRQRSKTESDCVLL) is disordered. The residue at position 440 (S440) is a Phosphoserine. A compositionally biased stretch (basic and acidic residues) spans 452 to 468 (AGERRQRSKTESDCVLL).

This sequence belongs to the MINDY deubiquitinase family. FAM63 subfamily.

The catalysed reaction is Thiol-dependent hydrolysis of ester, thioester, amide, peptide and isopeptide bonds formed by the C-terminal Gly of ubiquitin (a 76-residue protein attached to proteins as an intracellular targeting signal).. Functionally, hydrolase that can specifically remove 'Lys-48'-linked conjugated ubiquitin from proteins. Has exodeubiquitinase activity and has a preference for long polyubiquitin chains. May play a regulatory role at the level of protein turnover. This Mus musculus (Mouse) protein is Ubiquitin carboxyl-terminal hydrolase MINDY-1 (Mindy1).